We begin with the raw amino-acid sequence, 244 residues long: Phosphoribosyl isomerase A (244 aa).

Catalysis depends on Asp-10, which acts as the Proton acceptor. Asp-129 (proton donor) is an active-site residue.

Belongs to the HisA/HisF family.

Its subcellular location is the cytoplasm. It catalyses the reaction 1-(5-phospho-beta-D-ribosyl)-5-[(5-phospho-beta-D-ribosylamino)methylideneamino]imidazole-4-carboxamide = 5-[(5-phospho-1-deoxy-D-ribulos-1-ylimino)methylamino]-1-(5-phospho-beta-D-ribosyl)imidazole-4-carboxamide. The enzyme catalyses N-(5-phospho-beta-D-ribosyl)anthranilate = 1-(2-carboxyphenylamino)-1-deoxy-D-ribulose 5-phosphate. It participates in amino-acid biosynthesis; L-histidine biosynthesis; L-histidine from 5-phospho-alpha-D-ribose 1-diphosphate: step 4/9. It functions in the pathway amino-acid biosynthesis; L-tryptophan biosynthesis; L-tryptophan from chorismate: step 3/5. Its function is as follows. Involved in both the histidine and tryptophan biosynthetic pathways. This is Phosphoribosyl isomerase A (priA) from Mycobacterium leprae (strain TN).